Consider the following 466-residue polypeptide: ATP synthase subunit beta (466 aa).

156 to 163 (GGAGVGKT) provides a ligand contact to ATP.

The protein belongs to the ATPase alpha/beta chains family. As to quaternary structure, F-type ATPases have 2 components, CF(1) - the catalytic core - and CF(0) - the membrane proton channel. CF(1) has five subunits: alpha(3), beta(3), gamma(1), delta(1), epsilon(1). CF(0) has three main subunits: a(1), b(2) and c(9-12). The alpha and beta chains form an alternating ring which encloses part of the gamma chain. CF(1) is attached to CF(0) by a central stalk formed by the gamma and epsilon chains, while a peripheral stalk is formed by the delta and b chains.

The protein resides in the cell inner membrane. It catalyses the reaction ATP + H2O + 4 H(+)(in) = ADP + phosphate + 5 H(+)(out). Functionally, produces ATP from ADP in the presence of a proton gradient across the membrane. The catalytic sites are hosted primarily by the beta subunits. In Dechloromonas aromatica (strain RCB), this protein is ATP synthase subunit beta.